Consider the following 536-residue polypeptide: Glucan 1,6-alpha-glucosidase (536 aa).

The active-site Nucleophile is Asp194. Glu236 (proton donor) is an active-site residue.

Belongs to the glycosyl hydrolase 13 family.

It localises to the cytoplasm. The enzyme catalyses Hydrolysis of (1-&gt;6)-alpha-D-glucosidic linkages in (1-&gt;6)-alpha-D-glucans and derived oligosaccharides.. Its function is as follows. The physiological substrates may be short isomaltosaccharides. The polypeptide is Glucan 1,6-alpha-glucosidase (dexB) (Streptococcus mutans serotype c (strain ATCC 700610 / UA159)).